Reading from the N-terminus, the 77-residue chain is Dermaseptin-B9 (77 aa).

A signal peptide spans 1–22 (MAFLKKSLFLVLFLGLVSLSVC). 2 propeptides span residues 23–43 (EEEK…QSEE) and 76–77 (EQ).

Belongs to the frog skin active peptide (FSAP) family. Dermaseptin subfamily. In terms of tissue distribution, expressed by the skin glands.

The protein resides in the secreted. Its function is as follows. Has antimicrobial activity. Exhibits a bactericidal activity towards several species of mollicutes, firmicutes and gracilicutes. This peptide is membranotropic and it efficiently depolarizes the plasma membrane. This chain is Dermaseptin-B9 (DRG3), found in Phyllomedusa bicolor (Two-colored leaf frog).